The following is a 427-amino-acid chain: Terminal nucleotidyltransferase 5B (427 aa).

Acidic residues predominate over residues 1-11; the sequence is MMPSESGDESL. The interval 1–46 is disordered; the sequence is MMPSESGDESLEQPAAQVGTGAASAVATAGAAGGGPDLEASSASLG. Residues 15–30 are compositionally biased toward low complexity; the sequence is AAQVGTGAASAVATAG.

It belongs to the TENT family.

Its subcellular location is the cytoplasm. It localises to the nucleus. It carries out the reaction RNA(n) + ATP = RNA(n)-3'-adenine ribonucleotide + diphosphate. Catalyzes the transfer of one adenosine molecule from an ATP to an mRNA poly(A) tail bearing a 3'-OH terminal group in an ATP hydrolysis-dependent manner. May be involved in maintaining the translation efficiency of at least some genes through preventing degradation of their mRNAs. Prefers RNA molecules that are adenosine-rich close to 3'-end. In addition, may inhibit cell proliferation and cell cycle progression through ubiquitination of beta-catenin/CTNNB1. The chain is Terminal nucleotidyltransferase 5B from Rattus norvegicus (Rat).